A 134-amino-acid polypeptide reads, in one-letter code: Holo-[acyl-carrier-protein] synthase (134 aa).

Mg(2+)-binding residues include Asp-8 and Glu-57.

It belongs to the P-Pant transferase superfamily. AcpS family. The cofactor is Mg(2+).

Its subcellular location is the cytoplasm. It carries out the reaction apo-[ACP] + CoA = holo-[ACP] + adenosine 3',5'-bisphosphate + H(+). Its function is as follows. Transfers the 4'-phosphopantetheine moiety from coenzyme A to a Ser of acyl-carrier-protein. This is Holo-[acyl-carrier-protein] synthase from Rhizobium etli (strain CIAT 652).